The primary structure comprises 412 residues: Glutamate-pyruvate aminotransferase AlaC (412 aa).

Lysine 244 is modified (N6-(pyridoxal phosphate)lysine).

The protein belongs to the class-I pyridoxal-phosphate-dependent aminotransferase family. As to quaternary structure, homodimer. Pyridoxal 5'-phosphate is required as a cofactor.

It is found in the cytoplasm. The catalysed reaction is L-alanine + 2-oxoglutarate = pyruvate + L-glutamate. Its pathway is amino-acid biosynthesis; L-alanine biosynthesis. Functionally, involved in the biosynthesis of alanine. Catalyzes the transamination of pyruvate by glutamate, leading to the formation of L-alanine and 2-oxoglutarate. Is also able to catalyze the reverse reaction. This is Glutamate-pyruvate aminotransferase AlaC from Escherichia coli (strain K12).